The sequence spans 291 residues: Probable 2-(5''-triphosphoribosyl)-3'-dephosphocoenzyme-A synthase (291 aa).

Belongs to the CitG/MdcB family.

It carries out the reaction 3'-dephospho-CoA + ATP = 2'-(5''-triphospho-alpha-D-ribosyl)-3'-dephospho-CoA + adenine. Functionally, involved in the formation of 2-(5''-phosphoribosyl)-3'-dephosphocoenzyme-A, the prosthetic group of the acyl-carrier protein of the malonate decarboxylase. The chain is Probable 2-(5''-triphosphoribosyl)-3'-dephosphocoenzyme-A synthase from Pseudomonas fluorescens (strain ATCC BAA-477 / NRRL B-23932 / Pf-5).